The sequence spans 264 residues: Apolipoprotein A-I (264 aa).

An N-terminal signal peptide occupies residues 1–18; it reads MKAVLLVVAALFLAGSQA. 2 repeat units span residues 67–88 and 89–110. A 10 X approximate tandem repeats region spans residues 67–264; that stretch reads LRLSDNWDTL…DQASKQLAAQ (198 aa). The 3; half-length repeat unit spans residues 111–121; that stretch reads EDLQDVKHKVQ. 3 repeat units span residues 122-143, 144-165, and 166-187. The 7; truncated repeat unit spans residues 188 to 207; the sequence is PFSEEMRQRLAKRLEELKDS. A Methionine sulfoxide modification is found at Met-193. The stretch at 208-229 is repeat 8; the sequence is ATLADYHAKASEHLKMLGEKAK. The 9; half-length repeat unit spans residues 230 to 240; the sequence is PALEDLRQGLL. Repeat unit 10 spans residues 241–264; sequence PVLENLKASILSSIDQASKQLAAQ.

This sequence belongs to the apolipoprotein A1/A4/E family. As to quaternary structure, homodimer. Interacts with APOA1BP and CLU. Component of a sperm activating protein complex (SPAP), consisting of APOA1, an immunoglobulin heavy chain, an immunoglobulin light chain and albumin. Interacts with NDRG1. Interacts with SCGB3A2. Interacts with NAXE and YJEFN3. Glycosylated. In terms of processing, palmitoylated. Post-translationally, phosphorylation sites are present in the extracellular medium.

Its subcellular location is the secreted. Functionally, participates in the reverse transport of cholesterol from tissues to the liver for excretion by promoting cholesterol efflux from tissues and by acting as a cofactor for the lecithin cholesterol acyltransferase (LCAT). As part of the SPAP complex, activates spermatozoa motility. This is Apolipoprotein A-I (APOA1) from Cavia aperea (Brazilian guinea pig).